A 460-amino-acid polypeptide reads, in one-letter code: tRNA (guanine(37)-N(1))-methyltransferase (460 aa).

S-adenosyl-L-methionine contacts are provided by residues histidine 204, 243–244 (DL), 271–272 (DA), and asparagine 292. Positions 390-428 (ASTTTTPTTSNTNTSTTTSTTSTSTTTTESTNTNNSANN) are enriched in low complexity. The interval 390 to 460 (ASTTTTPTTS…SIDTNKKLKN (71 aa)) is disordered. Positions 442-451 (DSNETNETDS) are enriched in acidic residues.

This sequence belongs to the class I-like SAM-binding methyltransferase superfamily. TRM5/TYW2 family. Monomer.

Its subcellular location is the mitochondrion matrix. It is found in the nucleus. It localises to the cytoplasm. The catalysed reaction is guanosine(37) in tRNA + S-adenosyl-L-methionine = N(1)-methylguanosine(37) in tRNA + S-adenosyl-L-homocysteine + H(+). Specifically methylates the N1 position of guanosine-37 in various cytoplasmic and mitochondrial tRNAs. Methylation is not dependent on the nature of the nucleoside 5' of the target nucleoside. This is the first step in the biosynthesis of wybutosine (yW), a modified base adjacent to the anticodon of tRNAs and required for accurate decoding. In Dictyostelium discoideum (Social amoeba), this protein is tRNA (guanine(37)-N(1))-methyltransferase (trmt5).